The chain runs to 283 residues: tRNA-cytidine(32) 2-sulfurtransferase (283 aa).

Residues 32-37 (SGGKDS) carry the PP-loop motif motif. Residues C107, C110, and C198 each coordinate [4Fe-4S] cluster.

This sequence belongs to the TtcA family. As to quaternary structure, homodimer. Mg(2+) serves as cofactor. It depends on [4Fe-4S] cluster as a cofactor.

It localises to the cytoplasm. The catalysed reaction is cytidine(32) in tRNA + S-sulfanyl-L-cysteinyl-[cysteine desulfurase] + AH2 + ATP = 2-thiocytidine(32) in tRNA + L-cysteinyl-[cysteine desulfurase] + A + AMP + diphosphate + H(+). The protein operates within tRNA modification. Catalyzes the ATP-dependent 2-thiolation of cytidine in position 32 of tRNA, to form 2-thiocytidine (s(2)C32). The sulfur atoms are provided by the cysteine/cysteine desulfurase (IscS) system. The sequence is that of tRNA-cytidine(32) 2-sulfurtransferase from Sorangium cellulosum (strain So ce56) (Polyangium cellulosum (strain So ce56)).